A 209-amino-acid chain; its full sequence is Outer-membrane lipoprotein carrier protein (209 aa).

Residues 1 to 21 (MHRQLRYAVLATALFASTAFA) form the signal peptide.

The protein belongs to the LolA family. In terms of assembly, monomer.

The protein localises to the periplasm. Its function is as follows. Participates in the translocation of lipoproteins from the inner membrane to the outer membrane. Only forms a complex with a lipoprotein if the residue after the N-terminal Cys is not an aspartate (The Asp acts as a targeting signal to indicate that the lipoprotein should stay in the inner membrane). This chain is Outer-membrane lipoprotein carrier protein, found in Xanthomonas campestris pv. campestris (strain 8004).